The chain runs to 400 residues: Phosphoglycerate kinase (400 aa).

Substrate-binding positions include 22-24 (DFN), Arg38, 61-64 (HLGR), Arg119, and Arg152. Residues Lys205, Gly296, Glu327, and 353–356 (GGDT) contribute to the ATP site.

Belongs to the phosphoglycerate kinase family. As to quaternary structure, monomer.

Its subcellular location is the cytoplasm. It carries out the reaction (2R)-3-phosphoglycerate + ATP = (2R)-3-phospho-glyceroyl phosphate + ADP. It participates in carbohydrate degradation; glycolysis; pyruvate from D-glyceraldehyde 3-phosphate: step 2/5. In Campylobacter jejuni subsp. jejuni serotype O:6 (strain 81116 / NCTC 11828), this protein is Phosphoglycerate kinase.